Here is a 122-residue protein sequence, read N- to C-terminus: Protein GL2-INTERACTING REPRESSOR 1 (122 aa).

The span at 1 to 10 (MSRRSPKLEL) shows a compositional bias: basic and acidic residues. The tract at residues 1 to 62 (MSRRSPKLEL…PSVRYSTSPE (62 aa)) is disordered. The short motif at 7–12 (KLELKL) is the EAR element. Residues 27-46 (SPSRSATTSPTSPPSSCVSS) show a composition bias toward low complexity. Positions 47 to 62 (EMNQDEPSVRYSTSPE) are enriched in polar residues.

In terms of assembly, interacts with GL2. Interacts with TPL. As to expression, expressed in root and shoot meristems.

The protein resides in the nucleus. Acts as a negative regulator of root hair development redundantly with GIR2. GIR1 and GIR2 may function as adapter proteins that associate with GL2 and participate in the control of root hair formation. GIR1 and GIR2 may function as adapter proteins that associate with TPL and participate in the repression of root gene expression. The protein is Protein GL2-INTERACTING REPRESSOR 1 of Arabidopsis thaliana (Mouse-ear cress).